The sequence spans 327 residues: MTSTLRVAFAGTPEFAQIALAAIHQAGFPVVAVLSQPDRPAGRGMQLQASPVTQYAVTHGFAPILQPPSLRRTGKYPQEAAEAIDALTAQRPDVMVVAAYGLILPQEVLDLPRFGCINIHASLLPRWRGAAPIHRAIEAGDAESGITLMQMDAGLDTGDMIAMERVPIGLTDTTGTLHDTLAALGGRMVVEALAKLAQDGKLHATPQPAEGITYAEKIAKDEAALDWSRHAAALLRQVHAFNPFPGASAALDGVAIKFWQAEVLADRPAEAEPGVVLAANAEGVTIACGAGALRVTQLQKPGGKRLPAREFLQGLAIQPGQRFASRG.

Position 122-125 (122-125 (SLLP)) interacts with (6S)-5,6,7,8-tetrahydrofolate.

It belongs to the Fmt family.

It carries out the reaction L-methionyl-tRNA(fMet) + (6R)-10-formyltetrahydrofolate = N-formyl-L-methionyl-tRNA(fMet) + (6S)-5,6,7,8-tetrahydrofolate + H(+). Its function is as follows. Attaches a formyl group to the free amino group of methionyl-tRNA(fMet). The formyl group appears to play a dual role in the initiator identity of N-formylmethionyl-tRNA by promoting its recognition by IF2 and preventing the misappropriation of this tRNA by the elongation apparatus. The sequence is that of Methionyl-tRNA formyltransferase from Ralstonia pickettii (strain 12J).